We begin with the raw amino-acid sequence, 102 residues long: NADH-quinone oxidoreductase subunit K (102 aa).

Helical transmembrane passes span 5-25 (LSHY…GIFL), 31-51 (IVIL…MVAF), and 65-85 (LFIL…LVVF).

Belongs to the complex I subunit 4L family. As to quaternary structure, NDH-1 is composed of 14 different subunits. Subunits NuoA, H, J, K, L, M, N constitute the membrane sector of the complex.

The protein resides in the cell inner membrane. It catalyses the reaction a quinone + NADH + 5 H(+)(in) = a quinol + NAD(+) + 4 H(+)(out). Functionally, NDH-1 shuttles electrons from NADH, via FMN and iron-sulfur (Fe-S) centers, to quinones in the respiratory chain. The immediate electron acceptor for the enzyme in this species is believed to be ubiquinone. Couples the redox reaction to proton translocation (for every two electrons transferred, four hydrogen ions are translocated across the cytoplasmic membrane), and thus conserves the redox energy in a proton gradient. This Rhizobium johnstonii (strain DSM 114642 / LMG 32736 / 3841) (Rhizobium leguminosarum bv. viciae) protein is NADH-quinone oxidoreductase subunit K.